A 61-amino-acid polypeptide reads, in one-letter code: Small ribosomal subunit protein uS14 (61 aa).

Cys24, Cys27, Cys40, and Cys43 together coordinate Zn(2+).

It belongs to the universal ribosomal protein uS14 family. Zinc-binding uS14 subfamily. In terms of assembly, part of the 30S ribosomal subunit. Contacts proteins S3 and S10. Zn(2+) is required as a cofactor.

Its function is as follows. Binds 16S rRNA, required for the assembly of 30S particles and may also be responsible for determining the conformation of the 16S rRNA at the A site. This Clostridium botulinum (strain ATCC 19397 / Type A) protein is Small ribosomal subunit protein uS14.